The sequence spans 142 residues: Small ribosomal subunit protein bS18m (142 aa).

It belongs to the bacterial ribosomal protein bS18 family. In terms of assembly, component of the mitochondrial small ribosomal subunit (mt-SSU). Mature mammalian 55S mitochondrial ribosomes consist of a small (28S) and a large (39S) subunit. The 28S small subunit contains a 12S ribosomal RNA (12S mt-rRNA) and 30 different proteins. The 39S large subunit contains a 16S rRNA (16S mt-rRNA), a copy of mitochondrial valine transfer RNA (mt-tRNA(Val)), which plays an integral structural role, and 52 different proteins. bS18m has a zinc binding site.

Its subcellular location is the mitochondrion. The chain is Small ribosomal subunit protein bS18m (MRPS18C) from Homo sapiens (Human).